Here is a 616-residue protein sequence, read N- to C-terminus: Secretogranin-2 (616 aa).

The first 27 residues, 1–27 (MAEAKTHWLGASLSLILLIFLLATAEA), serve as a signal peptide directing secretion. Residues 28–30 (ASF) constitute a propeptide that is removed on maturation. Disordered stretches follow at residues 68–104 (QAHKEESSPDYNPYQGVSVPLQQKENSDLPESSRDSL) and 120–146 (AENEPQSSLKENKPYTLNSEKNFPMDM). Basic and acidic residues predominate over residues 92–104 (ENSDLPESSRDSL). The segment covering 122–140 (NEPQSSLKENKPYTLNSEK) has biased composition (polar residues). A Sulfotyrosine modification is found at Tyr150. Residues Ser173, Ser267, Ser431, Ser531, Ser554, and Ser555 each carry the phosphoserine modification. The segment covering 255–283 (KIESQTQEEVRDSKENIEKNEQINDEMKR) has biased composition (basic and acidic residues). The segment at 255 to 290 (KIESQTQEEVRDSKENIEKNEQINDEMKRSGQMGLQ) is disordered. Residues 548 to 560 (ERLNQHSSQETDK) are compositionally biased toward basic and acidic residues. Residues 548–582 (ERLNQHSSQETDKLALVSKRLPVATPKSDDAPNRQ) are disordered.

Belongs to the chromogranin/secretogranin protein family. Interacts with Secretogranin III/SCG3.

The protein resides in the secreted. Functionally, neuroendocrine protein of the granin family that regulates the biogenesis of secretory granules. The sequence is that of Secretogranin-2 (SCG2) from Sus scrofa (Pig).